A 134-amino-acid chain; its full sequence is Cytochrome b5 (134 aa).

N-acetylalanine is present on Ala-2. Lys-7, Lys-10, and Lys-19 each carry N6-acetyllysine. In terms of domain architecture, Cytochrome b5 heme-binding spans 9-85 (VKYYTLEEIQ…SKTYIIGELH (77 aa)). Residues His-44 and His-68 each coordinate heme. The chain crosses the membrane as a helical span at residues 109-131 (WWTNWVIPAISALVVALMYRLYM).

This sequence belongs to the cytochrome b5 family.

The protein localises to the endoplasmic reticulum membrane. It localises to the microsome membrane. Cytochrome b5 is a membrane-bound hemoprotein functioning as an electron carrier for several membrane-bound oxygenases. It is also involved in several steps of the sterol biosynthesis pathway, particularly in the C-6 double bond introduction during the C-6 desaturation. This chain is Cytochrome b5 (Cyb5a), found in Rattus norvegicus (Rat).